The primary structure comprises 175 residues: NADH-ubiquinone oxidoreductase chain 6 (175 aa).

The next 6 membrane-spanning stretches (helical) occupy residues M1 to S21, S25 to M45, F47 to V67, A87 to V107, V116 to F136, and Y149 to L169.

This sequence belongs to the complex I subunit 6 family. In terms of assembly, core subunit of respiratory chain NADH dehydrogenase (Complex I) which is composed of 45 different subunits.

The protein localises to the mitochondrion inner membrane. It catalyses the reaction a ubiquinone + NADH + 5 H(+)(in) = a ubiquinol + NAD(+) + 4 H(+)(out). Its function is as follows. Core subunit of the mitochondrial membrane respiratory chain NADH dehydrogenase (Complex I) which catalyzes electron transfer from NADH through the respiratory chain, using ubiquinone as an electron acceptor. Essential for the catalytic activity and assembly of complex I. This chain is NADH-ubiquinone oxidoreductase chain 6 (MT-ND6), found in Ceratotherium simum (White rhinoceros).